The primary structure comprises 485 residues: Zinc finger protein 165 (485 aa).

Residue K23 forms a Glycyl lysine isopeptide (Lys-Gly) (interchain with G-Cter in SUMO2) linkage. One can recognise an SCAN box domain in the interval G62–L127. Residues K162 and K195 each participate in a glycyl lysine isopeptide (Lys-Gly) (interchain with G-Cter in SUMO2) cross-link. A C2H2-type 1; degenerate zinc finger spans residues K290 to Y314. 5 C2H2-type zinc fingers span residues H344–H366, Y372–H394, F400–H422, Y428–H450, and Y456–H478.

It belongs to the krueppel C2H2-type zinc-finger protein family. As to expression, expressed specifically in testis.

The protein resides in the nucleus. In terms of biological role, may be involved in transcriptional regulation. The sequence is that of Zinc finger protein 165 (ZNF165) from Homo sapiens (Human).